Reading from the N-terminus, the 194-residue chain is MTATRGFTLLEILLVLVLVSASAVAVIATFPVSVKDEAKISAQSFYQRLLLLNEEAILSGQDFGVRIDVDTRRLTFLQLTADKGWQKWQNDKMTNQTTLKEGLQLDFELGGGAWQKDDRLFNPGSLFDEEMFADEKKEQKQEPAPQLFVLSSGEVTPFTLSIFPKGQEPDEQWRVTAQENGTLRLLAPGESDEE.

The propeptide at 1 to 6 (MTATRG) is leader sequence. N-methylphenylalanine is present on F7. A helical transmembrane segment spans residues 12 to 32 (ILLVLVLVSASAVAVIATFPV).

It belongs to the GSP H family. In terms of assembly, type II secretion is composed of four main components: the outer membrane complex, the inner membrane complex, the cytoplasmic secretion ATPase and the periplasm-spanning pseudopilus. Interacts with core component EpsG. Post-translationally, cleaved by prepilin peptidase. Methylated by prepilin peptidase at the amino group of the N-terminal phenylalanine once the leader sequence is cleaved by prepilin peptidase.

Its subcellular location is the cell inner membrane. Functionally, component of the type II secretion system required for the energy-dependent secretion of extracellular factors such as proteases and toxins from the periplasm. Part of the pseudopilus tip complex that is critical for the recognition and binding of secretion substrates. This chain is Type II secretion system protein H (epsH), found in Vibrio cholerae serotype O1 (strain ATCC 39315 / El Tor Inaba N16961).